Here is a 237-residue protein sequence, read N- to C-terminus: Ribosomal RNA small subunit methyltransferase G (237 aa).

Residues glycine 78, phenylalanine 83, alanine 129–glutamate 130, and arginine 148 contribute to the S-adenosyl-L-methionine site. The tract at residues lysine 218–leucine 237 is disordered.

The protein belongs to the methyltransferase superfamily. RNA methyltransferase RsmG family.

The protein resides in the cytoplasm. Its function is as follows. Specifically methylates the N7 position of a guanine in 16S rRNA. The protein is Ribosomal RNA small subunit methyltransferase G of Streptococcus suis (strain 98HAH33).